The sequence spans 278 residues: Putative transcription factor kapC (278 aa).

Residues 1-10 are compositionally biased toward pro residues; sequence MQPALAPAPH. A disordered region spans residues 1–121; that stretch reads MQPALAPAPH…QNRAAQRAFR (121 aa). Over residues 56–68 the composition is skewed to polar residues; that stretch reads PTATTSPRDQNNI. The region spanning 103–166 is the bZIP domain; that stretch reads PLSTSKRAAQ…EYVINLQSRL (64 aa). The interval 104 to 127 is basic motif; that stretch reads LSTSKRAAQNRAAQRAFRQRKESY. The segment covering 109-119 has biased composition (low complexity); sequence RAAQNRAAQRA. Residues 131–162 are leucine-zipper; it reads LEEQVKEYEVMSQEYKALQAENYQLREYVINL. The disordered stretch occupies residues 173 to 278; that stretch reads VPELPGNIDL…PPTHGLPMVS (106 aa). Residues 198–214 are compositionally biased toward low complexity; that stretch reads PGQAGASAPPQGSPQSQ. The segment covering 215–226 has biased composition (polar residues); the sequence is VSIANDDMNSLN. Residues 254 to 269 show a composition bias toward basic and acidic residues; it reads GRGDETADPSETKTEP.

It belongs to the bZIP family.

Its subcellular location is the nucleus. Its function is as follows. Putative transcription factor. This is Putative transcription factor kapC (kapC) from Emericella nidulans (strain FGSC A4 / ATCC 38163 / CBS 112.46 / NRRL 194 / M139) (Aspergillus nidulans).